The sequence spans 389 residues: MQQHSSKTAYVYSDKLLQYRFHDQHPFNQMRLKLTTELLLNANLLSPEQIVQPRIATGDELMLIHKYDYVEAIKHASHGIISEDEAKKYGLNDEENGQFKHMHRHSATIVGGALTLADLIMSGKVLNGCHLGGGLHHAQPGRASGFCIYNDIAITAQYIAKEYNQRVLIIDTDAHHGDGTQWSFYADNHVTTYSIHETGKFLFPGSGHYTERGEDIGYGHTVNVPLEPYTEDASFLECFKLTVEPVVKSFKPDIILSVNGVDIHYRDPLTHLNCTLHSLYEIPYFVKYLADSYTNGKVIMFGGGGYNIWRVVPRAWSHVFLSLIDQPIQSGYLPLEWINKWKHYSSELLPKRWEDRLNDYTYVPRTKEISEKNKKLALHIASWYESTRQ.

This sequence belongs to the histone deacetylase family.

Its pathway is ketone degradation; acetoin degradation. Functionally, role in growth on acetoin or butanediol. Involved in the breakdown of these compounds used as a carbon source. This is Acetoin utilization protein AcuC (acuC) from Staphylococcus aureus (strain Mu50 / ATCC 700699).